Here is a 596-residue protein sequence, read N- to C-terminus: Estrogen receptor (596 aa).

Positions 1 to 185 (MTMTLHTKAS…AMESAKETRY (185 aa)) are modulating (transactivation AF-1); mediates interaction with MACROD1. Residue serine 10 is glycosylated (O-linked (GlcNAc) serine). The interval 36–48 (ERPLGEVYMDSSK) is required for interaction with NCOA1. Residues 36–175 (ERPLGEVYMD…LASTSDKGSM (140 aa)) form an interaction with DDX5; self-association region. Serine 104 and serine 106 each carry phosphoserine; by CDK2. Serine 119 carries the phosphoserine modification. The disordered stretch occupies residues 144-175 (EAGPPAYYRPNSDNRRQGGRERLASTSDKGSM). Basic and acidic residues predominate over residues 155-166 (SDNRRQGGRERL). Serine 168 is modified (phosphoserine; by CK2). 2 consecutive NR C4-type zinc fingers follow at residues 186 to 206 (CAVC…CEGC) and 222 to 246 (CPAT…LRKC). Positions 186 to 251 (CAVCNDYASG…RLRKCYEVGM (66 aa)) form a DNA-binding region, nuclear receptor. Positions 186-311 (CAVCNDYASG…TKKNSPVLSL (126 aa)) are mediates interaction with DNTTIP2. Residues 252 to 311 (MKGGIRKDRRGGRMLKHKRQRDDGEGRNEAVPSGDMRAANLWPSPIMIKHTKKNSPVLSL) are hinge. Residues 259–270 (DRRGGRMLKHKR) show a composition bias toward basic residues. Positions 259-285 (DRRGGRMLKHKRQRDDGEGRNEAVPSG) are disordered. Arginine 261 carries the post-translational modification Asymmetric dimethylarginine; by PRMT1. Positions 263–596 (GRMLKHKRQR…GEAENFPSTV (334 aa)) are interaction with AKAP13. The interval 265-595 (MLKHKRQRDD…TGEAENFPST (331 aa)) is self-association. The region spanning 312–548 (TADQMISALL…DLLLEMLDAH (237 aa)) is the NR LBD domain. The interval 312-595 (TADQMISALL…TGEAENFPST (284 aa)) is transactivation AF-2. Residues glutamate 354 and arginine 395 each coordinate 17beta-estradiol. The S-palmitoyl cysteine moiety is linked to residue cysteine 448. 17beta-estradiol is bound at residue histidine 525. Tyrosine 538 carries the post-translational modification Phosphotyrosine; by Tyr-kinases. A glycan (O-linked (GlcNAc) threonine) is linked at threonine 572.

This sequence belongs to the nuclear hormone receptor family. NR3 subfamily. In terms of assembly, binds DNA as a homodimer. Can form a heterodimer with ESR2. Interacts with coactivator NCOA5. Interacts with PELP1, the interaction is enhanced by 17-beta-estradiol; the interaction increases ESR1 transcriptional activity. Interacts with NCOA7; the interaction is ligand-inducible. Interacts with AKAP13, CUEDC2, HEXIM1, KDM5A, MAP1S, SMARD1, and UBE1C. Interacts with MUC1; the interaction is stimulated by 7 beta-estradiol (E2) and enhances ESR1-mediated transcription. Interacts with DNTTIP2, and UIMC1. Interacts with KMT2D/MLL2. Interacts with ATAD2; the interaction is enhanced by estradiol. Interacts with KIF18A and LDB1. Interacts with RLIM (via its C-terminus). Interacts with MACROD1. Interacts with SH2D4A and PLCG. Interacts with SH2D4A; the interaction blocks binding to PLCG and inhibits estrogen-induced cell proliferation. Interacts with DYNLL1. Interacts with CCDC62; the interaction requires estradiol and appears to enhance the transcription of target genes. Interacts with NR2C1; the interaction prevents homodimerization of ESR1 and suppresses its transcriptional activity and cell growth. Interacts with DNAAF4. Interacts with PRMT2. Interacts with RBFOX2. Interacts with EP300; the interaction is estrogen-dependent and enhanced by CITED1. Interacts with CITED1; the interaction is estrogen-dependent. Interacts with FAM120B, FOXL2, PHB2 and SLC30A9. Interacts with coactivators NCOA3 and NCOA6. Interacts with STK3/MST2 only in the presence of SAV1 and vice-versa. Binds to CSNK1D. Interacts with NCOA2; NCOA2 can interact with ESR1 AF-1 and AF-2 domains simultaneously and mediate their transcriptional synergy. Interacts with DDX5. Interacts with NCOA1; the interaction seems to require a self-association of N-terminal and C-terminal regions. Interacts with ZNF366, DDX17, NFKB1, RELA, SP1 and SP3. Interacts with NRIP1. Interacts with GPER1; the interaction occurs in an estrogen-dependent manner. Interacts with CLOCK and the interaction is stimulated by estrogen. Interacts with TRIP4 (ufmylated); estrogen dependent. Interacts with LMTK3; the interaction phosphorylates ESR1 (in vitro) and protects it against proteasomal degradation. Interacts with CCAR2 (via N-terminus) in a ligand-independent manner. Interacts with ZFHX3. Interacts with SFR1 in a ligand-dependent and -independent manner. Interacts with DCAF13, LATS1 and DCAF1; regulates ESR1 ubiquitination and ubiquitin-mediated proteasomal degradation. Interacts (via DNA-binding domain) with POU4F2 (C-terminus); this interaction increases the estrogen receptor ESR1 transcriptional activity in a DNA- and ligand 17-beta-estradiol-independent manner. Interacts with ESRRB isoform 1. Interacts with UBE3A and WBP2. Interacts with GTF2B. Interacts with RBM39. In the absence of hormonal ligand, interacts with TACC1. Interacts with PI3KR1 or PI3KR2 and PTK2/FAK1. Interacts with SRC. Interacts with BAG1; the interaction is promoted in the absence of estradiol (17-beta-estradiol/E2). Interacts with and ubiquitinated by STUB1; the interaction is promoted in the absence of estradiol (17-beta-estradiol/E2). Interacts with NEDD8. Post-translationally, glycosylated; contains N-acetylglucosamine, probably O-linked. In terms of processing, ubiquitinated; regulated by LATS1 via DCAF1 it leads to ESR1 proteasomal degradation. Deubiquitinated by OTUB1. Ubiquitinated by STUB1/CHIP; in the CA1 hippocampal region following loss of endogenous circulating estradiol (17-beta-estradiol/E2). Ubiquitinated by UBR5, leading to its degradation: UBR5 specifically recognizes and binds ligand-bound ESR1 when it is not associated with coactivators (NCOAs). In presence of NCOAs, the UBR5-degron is not accessible, preventing its ubiquitination and degradation. Phosphorylated by cyclin A/CDK2 and CK1. Phosphorylation probably enhances transcriptional activity. Dephosphorylation at Ser-119 by PPP5C inhibits its transactivation activity. Phosphorylated by LMTK3 (in vitro). Post-translationally, palmitoylated at Cys-448 by ZDHHC7 and ZDHHC21. Palmitoylation is required for plasma membrane targeting and for rapid intracellular signaling via ERK and AKT kinases and cAMP generation, but not for signaling mediated by the nuclear hormone receptor. In terms of processing, dimethylated by PRMT1 at Arg-261. The methylation may favor cytoplasmic localization. Demethylated by JMJD6 at Arg-261.

The protein resides in the nucleus. The protein localises to the cytoplasm. It localises to the golgi apparatus. Its subcellular location is the cell membrane. In terms of biological role, nuclear hormone receptor. The steroid hormones and their receptors are involved in the regulation of eukaryotic gene expression and affect cellular proliferation and differentiation in target tissues. Ligand-dependent nuclear transactivation involves either direct homodimer binding to a palindromic estrogen response element (ERE) sequence or association with other DNA-binding transcription factors, such as AP-1/c-Jun, c-Fos, ATF-2, Sp1 and Sp3, to mediate ERE-independent signaling. Ligand binding induces a conformational change allowing subsequent or combinatorial association with multiprotein coactivator complexes through LXXLL motifs of their respective components. Mutual transrepression occurs between the estrogen receptor (ER) and NF-kappa-B in a cell-type specific manner. Decreases NF-kappa-B DNA-binding activity and inhibits NF-kappa-B-mediated transcription from the IL6 promoter and displace RELA/p65 and associated coregulators from the promoter. Recruited to the NF-kappa-B response element of the CCL2 and IL8 promoters and can displace CREBBP. Present with NF-kappa-B components RELA/p65 and NFKB1/p50 on ERE sequences. Can also act synergistically with NF-kappa-B to activate transcription involving respective recruitment adjacent response elements; the function involves CREBBP. Can activate the transcriptional activity of TFF1. Also mediates membrane-initiated estrogen signaling involving various kinase cascades. Essential for MTA1-mediated transcriptional regulation of BRCA1 and BCAS3. Maintains neuronal survival in response to ischemic reperfusion injury when in the presence of circulating estradiol (17-beta-estradiol/E2). The protein is Estrogen receptor (ESR1) of Bos taurus (Bovine).